Consider the following 359-residue polypeptide: Phospho-N-acetylmuramoyl-pentapeptide-transferase (359 aa).

10 consecutive transmembrane segments (helical) span residues 3–23 (QILFAAGIALAVSILLTPVLI), 53–73 (GGVAILAGLWAGYWGSHLIGI), 84–104 (GLLVLGLTTALGGVGFLDDFI), 117–137 (TAKLVGQLIAAVAFGILALQF), 156–176 (IATVTMGSVVFVAFCYLLVSA), 187–207 (LDGLAAGSMSLVLGAYVIITF), 231–251 (LALICAAGAGACIGFLWWNAA), 255–275 (IFMGDTGSLALGGMLAGLSIT), 283–303 (VVIGALFVAEAASVVIQVAVF), and 330–350 (VIIRFWLLAAIASAIGLALFY).

This sequence belongs to the glycosyltransferase 4 family. MraY subfamily. Mg(2+) serves as cofactor.

It localises to the cell membrane. It carries out the reaction UDP-N-acetyl-alpha-D-muramoyl-L-alanyl-gamma-D-glutamyl-meso-2,6-diaminopimeloyl-D-alanyl-D-alanine + di-trans,octa-cis-undecaprenyl phosphate = di-trans,octa-cis-undecaprenyl diphospho-N-acetyl-alpha-D-muramoyl-L-alanyl-D-glutamyl-meso-2,6-diaminopimeloyl-D-alanyl-D-alanine + UMP. The protein operates within cell wall biogenesis; peptidoglycan biosynthesis. Its function is as follows. Catalyzes the initial step of the lipid cycle reactions in the biosynthesis of the cell wall peptidoglycan: transfers peptidoglycan precursor phospho-MurNAc-pentapeptide from UDP-MurNAc-pentapeptide onto the lipid carrier undecaprenyl phosphate, yielding undecaprenyl-pyrophosphoryl-MurNAc-pentapeptide, known as lipid I. In Rhodococcus opacus (strain B4), this protein is Phospho-N-acetylmuramoyl-pentapeptide-transferase.